Reading from the N-terminus, the 66-residue chain is Beta-toxin Css6 (66 aa).

The 66-residue stretch at 1–66 folds into the LCN-type CS-alpha/beta domain; the sequence is KEGYLVNSYT…VWPLPNKTCN (66 aa). 4 cysteine pairs are disulfide-bonded: C12–C65, C16–C41, C25–C46, and C29–C48. N66 is subject to Asparagine amide.

Belongs to the long (4 C-C) scorpion toxin superfamily. Sodium channel inhibitor family. Beta subfamily. Expressed by the venom gland.

Its subcellular location is the secreted. Functionally, beta toxins bind voltage-independently at site-4 of sodium channels (Nav) and shift the voltage of activation toward more negative potentials thereby affecting sodium channel activation and promoting spontaneous and repetitive firing. The sequence is that of Beta-toxin Css6 from Centruroides suffusus (Durango bark scorpion).